We begin with the raw amino-acid sequence, 233 residues long: MAKLTKRARLIREKVEVTKNYDINEAVALLKELATAKFVESVDVAVNLGVDPRKSDQNVRGATVLPHGTGRDVRVAVFTQGANAEAATAAGAELVGMDELAAQVKAGEMNFDVVIASPDAMRVVGQLGQILGPRGLMPNPKTGTVTPNVAEAVKNAKAGQVRYRTDKNGIIHTTIGKVDFEAAQIKENLEALIGALVKAKPAAAKGVFLKKVSISTTMGAGVAVDQSTLDDAK.

This sequence belongs to the universal ribosomal protein uL1 family. Part of the 50S ribosomal subunit.

Binds directly to 23S rRNA. The L1 stalk is quite mobile in the ribosome, and is involved in E site tRNA release. Functionally, protein L1 is also a translational repressor protein, it controls the translation of the L11 operon by binding to its mRNA. The chain is Large ribosomal subunit protein uL1 from Shewanella sediminis (strain HAW-EB3).